The sequence spans 483 residues: Zinc metalloproteinase/disintegrin (483 aa).

The N-terminal stretch at Met-1 to Ser-20 is a signal peptide. Residues Ile-21–Glu-190 constitute a propeptide that is removed on maturation. Residues Arg-197–Pro-395 form the Peptidase M12B domain. Intrachain disulfides connect Cys-308–Cys-390, Cys-352–Cys-374, and Cys-354–Cys-357. A Zn(2+)-binding site is contributed by His-333. The active site involves Glu-334. Positions 337 and 343 each coordinate Zn(2+). A propeptide spanning residues Leu-396 to Leu-411 is cleaved from the precursor. Residues Thr-403–Leu-483 form the Disintegrin domain. 6 disulfides stabilise this stretch: Cys-417–Cys-432, Cys-419–Cys-427, Cys-426–Cys-449, Cys-440–Cys-446, Cys-445–Cys-470, and Cys-458–Cys-477. Positions Arg-462–Asp-464 match the Cell attachment site motif.

The protein belongs to the venom metalloproteinase (M12B) family. P-II subfamily. P-IIa sub-subfamily. As to quaternary structure, monomer. It depends on Zn(2+) as a cofactor. In terms of tissue distribution, expressed by the venom gland.

The protein localises to the secreted. Functionally, impairs hemostasis in the envenomed animal. In terms of biological role, inhibits ADP- and collagen-induced human platelet aggregation with IC(50) of 123 and 135 nM, respectively. Inhibits sperm-egg binding in a concentration-dependent manner, but has no effect on the fusion of sperm-egg. The protein is Zinc metalloproteinase/disintegrin of Protobothrops jerdonii (Jerdon's pitviper).